The following is a 675-amino-acid chain: Calcium channel YVC1 (675 aa).

At 1 to 236 (MVSANGDLHL…PVRLKAPVYQ (236 aa)) the chain is on the cytoplasmic side. Residues 237–257 (NYLQMIFSFLFLGLYTLVVNG) form a helical membrane-spanning segment. The Vacuolar portion of the chain corresponds to 258–295 (KDSERVQSFDLLESIFYVFNTGFILDELTKLYYIGYAH). The chain crosses the membrane as a helical span at residues 296–316 (LSFWNLFNDTTYLIITFAMGF). Residues 317–335 (RAMSVTPLNAKYSSEDWDK) are Cytoplasmic-facing. A helical membrane pass occupies residues 336-355 (ISYRVLSCAAPFVWSRLLLY). Residues 356-376 (LESQRFIGIMLVILKHMMKES) are Vacuolar-facing. A helical transmembrane segment spans residues 377-397 (IVFFFLLFLIMIGFTQGFLGL). The Cytoplasmic segment spans residues 398–405 (DSADGKRD). Residues 406-426 (ITGPILGNLTITVLGLGSFDV) form a helical membrane-spanning segment. At 427–436 (FEEFAPPYAA) the chain is on the vacuolar side. Residues 437–457 (ILYYGYYFIVSVILLNILIAL) form a helical membrane-spanning segment. Topologically, residues 458-675 (YSTAYQKVID…EKLDIKDKKE (218 aa)) are cytoplasmic. The residue at position 636 (threonine 636) is a Phosphothreonine.

The protein belongs to the transient receptor (TC 1.A.4) family.

Its subcellular location is the vacuole membrane. Its function is as follows. Required for release of calcium ions from the vacuole in response to hyperosmotic shock. This chain is Calcium channel YVC1, found in Saccharomyces cerevisiae (strain ATCC 204508 / S288c) (Baker's yeast).